Reading from the N-terminus, the 258-residue chain is 1-(5-phosphoribosyl)-5-[(5-phosphoribosylamino)methylideneamino] imidazole-4-carboxamide isomerase (258 aa).

Asp-9 functions as the Proton acceptor in the catalytic mechanism. The Proton donor role is filled by Asp-131.

The protein belongs to the HisA/HisF family.

The protein localises to the cytoplasm. It carries out the reaction 1-(5-phospho-beta-D-ribosyl)-5-[(5-phospho-beta-D-ribosylamino)methylideneamino]imidazole-4-carboxamide = 5-[(5-phospho-1-deoxy-D-ribulos-1-ylimino)methylamino]-1-(5-phospho-beta-D-ribosyl)imidazole-4-carboxamide. It participates in amino-acid biosynthesis; L-histidine biosynthesis; L-histidine from 5-phospho-alpha-D-ribose 1-diphosphate: step 4/9. This Salinibacter ruber (strain DSM 13855 / M31) protein is 1-(5-phosphoribosyl)-5-[(5-phosphoribosylamino)methylideneamino] imidazole-4-carboxamide isomerase.